We begin with the raw amino-acid sequence, 151 residues long: Ubiquitin-like protein 4A-B (151 aa).

One can recognise a Ubiquitin-like domain in the interval 1 to 76; that stretch reads MILTIKPLKG…LNLVVRPAGE (76 aa).

In terms of assembly, component of the BAT3 complex.

The protein localises to the cytoplasm. The protein resides in the cytosol. Functionally, component of the BAT3 complex, a multiprotein complex involved in the post-translational delivery of tail-anchored (TA) membrane proteins to the endoplasmic reticulum membrane. TA membrane proteins, also named type II transmembrane proteins, contain a single C-terminal transmembrane region. This is Ubiquitin-like protein 4A-B (ubl4ab) from Oncorhynchus mykiss (Rainbow trout).